Here is a 1028-residue protein sequence, read N- to C-terminus: Carbamoyl phosphate synthase large chain (1028 aa).

A carboxyphosphate synthetic domain region spans residues 1–409; sequence MPPRRDLKKI…ALMKALRGLE (409 aa). ATP-binding residues include Arg-129, Arg-169, Gly-175, Gly-176, Glu-208, Val-210, Glu-215, Gly-241, Val-242, His-243, Gln-285, and Glu-299. Positions 133 to 328 constitute an ATP-grasp 1 domain; the sequence is QEAMQRIGLE…IAKIAALLAV (196 aa). Positions 285, 299, and 301 each coordinate Mg(2+). Residues Gln-285, Glu-299, and Asn-301 each coordinate Mn(2+). An oligomerization domain region spans residues 410–549; the sequence is RDVRALAGVR…YSTYELEDEV (140 aa). The tract at residues 550–933 is carbamoyl phosphate synthetic domain; it reads WPSQKPKVVI…AYYKAELGAG (384 aa). Residues 674-866 form the ATP-grasp 2 domain; sequence HALCQRLGIP…LAKLAALIAV (193 aa). 10 residues coordinate ATP: Arg-710, Arg-750, Leu-752, Glu-757, Gly-782, Val-783, His-784, Ser-785, Gln-825, and Glu-837. Residues Gln-825, Glu-837, and Asn-839 each contribute to the Mg(2+) site. Mn(2+) is bound by residues Gln-825, Glu-837, and Asn-839. In terms of domain architecture, MGS-like spans 934-1028; that stretch reads QRLPLSGRVR…QDWHQKAPRG (95 aa). The tract at residues 934-1028 is allosteric domain; sequence QRLPLSGRVR…QDWHQKAPRG (95 aa).

It belongs to the CarB family. As to quaternary structure, composed of two chains; the small (or glutamine) chain promotes the hydrolysis of glutamine to ammonia, which is used by the large (or ammonia) chain to synthesize carbamoyl phosphate. Tetramer of heterodimers (alpha,beta)4. Mg(2+) serves as cofactor. Requires Mn(2+) as cofactor.

The enzyme catalyses hydrogencarbonate + L-glutamine + 2 ATP + H2O = carbamoyl phosphate + L-glutamate + 2 ADP + phosphate + 2 H(+). The catalysed reaction is hydrogencarbonate + NH4(+) + 2 ATP = carbamoyl phosphate + 2 ADP + phosphate + 2 H(+). It participates in amino-acid biosynthesis; L-arginine biosynthesis; carbamoyl phosphate from bicarbonate: step 1/1. The protein operates within pyrimidine metabolism; UMP biosynthesis via de novo pathway; (S)-dihydroorotate from bicarbonate: step 1/3. Large subunit of the glutamine-dependent carbamoyl phosphate synthetase (CPSase). CPSase catalyzes the formation of carbamoyl phosphate from the ammonia moiety of glutamine, carbonate, and phosphate donated by ATP, constituting the first step of 2 biosynthetic pathways, one leading to arginine and/or urea and the other to pyrimidine nucleotides. The large subunit (synthetase) binds the substrates ammonia (free or transferred from glutamine from the small subunit), hydrogencarbonate and ATP and carries out an ATP-coupled ligase reaction, activating hydrogencarbonate by forming carboxy phosphate which reacts with ammonia to form carbamoyl phosphate. The sequence is that of Carbamoyl phosphate synthase large chain from Thermus thermophilus (strain ATCC 27634 / DSM 579 / HB8).